The following is a 347-amino-acid chain: GTPase Obg (347 aa).

Residues 1-159 (MQFLDQAKIY…AWVWLRLKLL (159 aa)) form the Obg domain. The tract at residues 124 to 144 (GRGNASYKSSTNRAPRQHGPG) is disordered. Residues 160–327 (ADVGLVGLPN…ILDQLITMTG (168 aa)) enclose the OBG-type G domain. Residues 166-173 (GLPNAGKS), 191-195 (FTTLH), 212-215 (DIPG), 279-282 (NKID), and 308-310 (SGA) contribute to the GTP site. Mg(2+) is bound by residues Ser-173 and Thr-193.

This sequence belongs to the TRAFAC class OBG-HflX-like GTPase superfamily. OBG GTPase family. Monomer. Requires Mg(2+) as cofactor.

The protein resides in the cytoplasm. Functionally, an essential GTPase which binds GTP, GDP and possibly (p)ppGpp with moderate affinity, with high nucleotide exchange rates and a fairly low GTP hydrolysis rate. Plays a role in control of the cell cycle, stress response, ribosome biogenesis and in those bacteria that undergo differentiation, in morphogenesis control. This chain is GTPase Obg, found in Zymomonas mobilis subsp. mobilis (strain ATCC 31821 / ZM4 / CP4).